The following is a 598-amino-acid chain: Aspartate--tRNA(Asp/Asn) ligase (598 aa).

Glu-172 lines the L-aspartate pocket. An aspartate region spans residues 196–199 (QLFK). Arg-218 is an L-aspartate binding site. ATP-binding positions include 218 to 220 (RDE) and Gln-227. His-454 contributes to the L-aspartate binding site. Glu-488 serves as a coordination point for ATP. Arg-495 contacts L-aspartate. Residue 540–543 (GLDR) participates in ATP binding.

It belongs to the class-II aminoacyl-tRNA synthetase family. Type 1 subfamily. As to quaternary structure, homodimer.

The protein resides in the cytoplasm. It catalyses the reaction tRNA(Asx) + L-aspartate + ATP = L-aspartyl-tRNA(Asx) + AMP + diphosphate. Its function is as follows. Aspartyl-tRNA synthetase with relaxed tRNA specificity since it is able to aspartylate not only its cognate tRNA(Asp) but also tRNA(Asn). Reaction proceeds in two steps: L-aspartate is first activated by ATP to form Asp-AMP and then transferred to the acceptor end of tRNA(Asp/Asn). In Leptothrix cholodnii (strain ATCC 51168 / LMG 8142 / SP-6) (Leptothrix discophora (strain SP-6)), this protein is Aspartate--tRNA(Asp/Asn) ligase.